We begin with the raw amino-acid sequence, 56 residues long: Photosystem II reaction center protein K (56 aa).

Residues M1–G19 constitute a propeptide that is removed on maturation. Residues M35 to F55 traverse the membrane as a helical segment.

This sequence belongs to the PsbK family. PSII is composed of 1 copy each of membrane proteins PsbA, PsbB, PsbC, PsbD, PsbE, PsbF, PsbH, PsbI, PsbJ, PsbK, PsbL, PsbM, PsbT, PsbX, PsbY, PsbZ, Psb30/Ycf12, at least 3 peripheral proteins of the oxygen-evolving complex and a large number of cofactors. It forms dimeric complexes.

Its subcellular location is the plastid. It is found in the chloroplast thylakoid membrane. One of the components of the core complex of photosystem II (PSII). PSII is a light-driven water:plastoquinone oxidoreductase that uses light energy to abstract electrons from H(2)O, generating O(2) and a proton gradient subsequently used for ATP formation. It consists of a core antenna complex that captures photons, and an electron transfer chain that converts photonic excitation into a charge separation. This is Photosystem II reaction center protein K from Pinus thunbergii (Japanese black pine).